Reading from the N-terminus, the 693-residue chain is Elongation factor G (693 aa).

Residues 8–282 (KNTRNIGIMA…AVIDYLPSPL (275 aa)) form the tr-type G domain. GTP contacts are provided by residues 17–24 (AHIDAGKT), 81–85 (DTPGH), and 135–138 (NKMD).

Belongs to the TRAFAC class translation factor GTPase superfamily. Classic translation factor GTPase family. EF-G/EF-2 subfamily.

It localises to the cytoplasm. Catalyzes the GTP-dependent ribosomal translocation step during translation elongation. During this step, the ribosome changes from the pre-translocational (PRE) to the post-translocational (POST) state as the newly formed A-site-bound peptidyl-tRNA and P-site-bound deacylated tRNA move to the P and E sites, respectively. Catalyzes the coordinated movement of the two tRNA molecules, the mRNA and conformational changes in the ribosome. This chain is Elongation factor G, found in Staphylococcus epidermidis (strain ATCC 35984 / DSM 28319 / BCRC 17069 / CCUG 31568 / BM 3577 / RP62A).